A 281-amino-acid chain; its full sequence is Inhibitor of growth protein 2 (281 aa).

A coiled-coil region spans residues V49 to K101. A disordered region spans residues S123–V204. The segment covering E131 to M141 has biased composition (basic and acidic residues). Positions K182 to K194 are enriched in basic residues. K196 participates in a covalent cross-link: Glycyl lysine isopeptide (Lys-Gly) (interchain with G-Cter in SUMO1). The PHD-type zinc-finger motif lies at P213–D262. Zn(2+)-binding residues include C216, C218, C229, C234, H240, C243, C256, and C259. Basic and acidic residues predominate over residues G261 to K275. The tract at residues G261–R281 is disordered. A PBR region spans residues K265 to R281.

The protein belongs to the ING family. Interacts with H3K4me3 and to a lesser extent with H3K4me2. Component of a mSin3A-like complex at least consisting of SIN3A, HDAC1, HDAC2, RBBP4/RbAp48, RBBP7/RbAp46, SAP30 and ING2. Sumoylation enhances its association with SIN3A and is required for binding to some target gene promoters, this is the case for TMEM71.

It localises to the nucleus. Seems to be involved in p53/TP53 activation and p53/TP53-dependent apoptotic pathways, probably by enhancing acetylation of p53/TP53. Component of a mSin3A-like corepressor complex, which is probably involved in deacetylation of nucleosomal histones. ING2 activity seems to be modulated by binding to phosphoinositides (PtdInsPs). This chain is Inhibitor of growth protein 2 (Ing2), found in Mus musculus (Mouse).